A 170-amino-acid polypeptide reads, in one-letter code: Inducible metalloproteinase inhibitor protein (170 aa).

The signal sequence occupies residues 1 to 19 (MKCLLYLCLWCYCVLVSSS). Residues asparagine 48 and asparagine 149 are each glycosylated (N-linked (GlcNAc...) asparagine).

In terms of processing, cleaved. Five disulfide bonds are present. When artificially cleaved by thermolysin between Asn-56 and Ile-57, the two obtained chains (called heavy and light chains) remain linked. Post-translationally, the N-terminus is blocked.

Inhibits thermolysin, bacillolysin and pseudolysin, B.polymyxa metalloprotease and human MMP1 and MMP3. No activity on trypsin or cysteine protease papain. The chain is Inducible metalloproteinase inhibitor protein (IMPI) from Galleria mellonella (Greater wax moth).